A 224-amino-acid chain; its full sequence is Cytochrome c biogenesis ATP-binding export protein CcmA (224 aa).

The 220-residue stretch at 1-220 folds into the ABC transporter domain; that stretch reads MQNAEAAPAL…EYAHAEVVGA (220 aa). Residue 40 to 47 coordinates ATP; sequence GANGSGKT.

It belongs to the ABC transporter superfamily. CcmA exporter (TC 3.A.1.107) family. As to quaternary structure, the complex is composed of two ATP-binding proteins (CcmA) and two transmembrane proteins (CcmB).

Its subcellular location is the cell inner membrane. The enzyme catalyses heme b(in) + ATP + H2O = heme b(out) + ADP + phosphate + H(+). Functionally, part of the ABC transporter complex CcmAB involved in the biogenesis of c-type cytochromes; once thought to export heme, this seems not to be the case, but its exact role is uncertain. Responsible for energy coupling to the transport system. This Bordetella bronchiseptica (strain ATCC BAA-588 / NCTC 13252 / RB50) (Alcaligenes bronchisepticus) protein is Cytochrome c biogenesis ATP-binding export protein CcmA.